Here is an 86-residue protein sequence, read N- to C-terminus: Small ribosomal subunit protein bS16 (86 aa).

It belongs to the bacterial ribosomal protein bS16 family.

This Bordetella petrii (strain ATCC BAA-461 / DSM 12804 / CCUG 43448) protein is Small ribosomal subunit protein bS16.